Consider the following 335-residue polypeptide: NADH-quinone oxidoreductase subunit H (335 aa).

Helical transmembrane passes span 12–32 (IIAV…GALL), 81–101 (VIFT…FAVI), 114–134 (IGLL…LFAG), 154–174 (VSYE…VGSF), 187–207 (LWFI…GVAV), 238–258 (FFVG…TLFF), 270–290 (SLAF…FILL), and 307–327 (WKFC…IVLL).

The protein belongs to the complex I subunit 1 family. In terms of assembly, NDH-1 is composed of 13 different subunits. Subunits NuoA, H, J, K, L, M, N constitute the membrane sector of the complex.

The protein resides in the cell inner membrane. It catalyses the reaction a quinone + NADH + 5 H(+)(in) = a quinol + NAD(+) + 4 H(+)(out). In terms of biological role, NDH-1 shuttles electrons from NADH, via FMN and iron-sulfur (Fe-S) centers, to quinones in the respiratory chain. The immediate electron acceptor for the enzyme in this species is believed to be ubiquinone. Couples the redox reaction to proton translocation (for every two electrons transferred, four hydrogen ions are translocated across the cytoplasmic membrane), and thus conserves the redox energy in a proton gradient. This subunit may bind ubiquinone. The sequence is that of NADH-quinone oxidoreductase subunit H from Pseudomonas syringae pv. tomato (strain ATCC BAA-871 / DC3000).